Reading from the N-terminus, the 639-residue chain is AP2-like ethylene-responsive transcription factor CRL5 (639 aa).

Disordered regions lie at residues 25-59 (PHMA…QQQH) and 258-277 (GRKR…HHRK). Residues 43–59 (QQQQQQQQQQHHQQQQH) show a composition bias toward low complexity. DNA-binding regions (AP2/ERF) lie at residues 288 to 351 (QYRG…INFP) and 387 to 445 (MYRG…TNFD). Over residues 547–561 (QQQQQHMSMSAASSL) the composition is skewed to low complexity. A disordered region spans residues 547-579 (QQQQQHMSMSAASSLVTSLSNSREGSPDRGGGL).

The protein belongs to the AP2/ERF transcription factor family. AP2 subfamily. Highly expressed at the base of the stem. Expressed in stems. Expressed a low levels in crown roots and seeds. Expressed in the stem region where adventitious (crown) root initiation occurs.

It localises to the nucleus. Acts as a positive regulator of adventitious (crown) root formation by promoting its initiation. Promotes adventitious root initiation through repression of cytokinin signaling by positively regulating the two-component response regulator RR1. Regulated by the auxin response factor and transcriptional activator ARF23/ARF1. This is AP2-like ethylene-responsive transcription factor CRL5 from Oryza sativa subsp. japonica (Rice).